The primary structure comprises 353 residues: Quinolinate synthase (353 aa).

Residues histidine 49 and serine 70 each coordinate iminosuccinate. A [4Fe-4S] cluster-binding site is contributed by cysteine 115. Iminosuccinate is bound by residues 141-143 and serine 158; that span reads YAN. Position 202 (cysteine 202) interacts with [4Fe-4S] cluster. Residues 228–230 and threonine 245 contribute to the iminosuccinate site; that span reads HPE. Cysteine 299 provides a ligand contact to [4Fe-4S] cluster.

Belongs to the quinolinate synthase family. Type 1 subfamily. The cofactor is [4Fe-4S] cluster.

It is found in the cytoplasm. It carries out the reaction iminosuccinate + dihydroxyacetone phosphate = quinolinate + phosphate + 2 H2O + H(+). It participates in cofactor biosynthesis; NAD(+) biosynthesis; quinolinate from iminoaspartate: step 1/1. Its function is as follows. Catalyzes the condensation of iminoaspartate with dihydroxyacetone phosphate to form quinolinate. The sequence is that of Quinolinate synthase from Marinobacter nauticus (strain ATCC 700491 / DSM 11845 / VT8) (Marinobacter aquaeolei).